A 259-amino-acid chain; its full sequence is MTTQQETLTDGNALKQFVVLAKSSKGRAIVSIIEKALNHPSVFVFGELLDMPNVQQLKETEFKNYYDLLLIFAYGSFIDYKNKKDSLPQLTPQMITKLKQLTIVFLSSTSNVIPYSVLQEQIEITNVRELEDLIIDSIYQNIIKGKLDQKNKHLEIDFSIGRDVQPEQLDSMINCLNNWSSTSQKLLDDISGLITHSDKVHLQYRKEKEEFESKFEIAKLNTKNDSPAEQLYYDSMEYSDEVRMKKGPKIKGKDYNKRP.

Residues 1–161 (MTTQQETLTD…KHLEIDFSIG (161 aa)) form the PCI domain.

It belongs to the CSN7/EIF3M family. CSN7 subfamily. As to quaternary structure, component of the CSN complex. The holocomplex is comprised of 8 subunits csn1-8. In the complex, it probably interacts directly with csn2, csn5, csn6 and csn8.

It is found in the cytoplasm. It localises to the nucleus. Component of the COP9 signalosome complex (CSN), a complex involved in various cellular and developmental processes. The CSN complex is an essential regulator of the ubiquitin (Ubl) conjugation pathway by mediating the deneddylation of the cullin subunits of E3 ligase complexes, leading to modify the Ubl ligase activity. In Dictyostelium discoideum (Social amoeba), this protein is COP9 signalosome complex subunit 7 (csn7).